Reading from the N-terminus, the 185-residue chain is Ribosome-recycling factor (185 aa).

The tract at residues 143 to 163 (EKEKLISEDDNKKGMDDIQKE) is disordered.

The protein belongs to the RRF family.

It localises to the cytoplasm. Its function is as follows. Responsible for the release of ribosomes from messenger RNA at the termination of protein biosynthesis. May increase the efficiency of translation by recycling ribosomes from one round of translation to another. The sequence is that of Ribosome-recycling factor from Syntrophomonas wolfei subsp. wolfei (strain DSM 2245B / Goettingen).